A 157-amino-acid chain; its full sequence is MNHSFFQPEKQYGEDLPIFDQEWEAIAFYYDYRQSQIEELNELCQFFNISLTYTRESLEELENLYFQSIQELLLADWNLPIEEFEKMISVYLIDCVIARHEDAEWVVKPYPYKDGAYTLGFRRHRKSWHTMNACDGLYLRPKEDRPLLSLFDSLVRS.

The stretch at 36–63 (QIEELNELCQFFNISLTYTRESLEELEN) forms a coiled coil.

This is an uncharacterized protein from Bacillus subtilis (strain 168).